The chain runs to 566 residues: Arginine--tRNA ligase (566 aa).

The 'HIGH' region signature appears at 123-133 (PNIAKPFHIGH).

Belongs to the class-I aminoacyl-tRNA synthetase family. As to quaternary structure, monomer.

Its subcellular location is the cytoplasm. The enzyme catalyses tRNA(Arg) + L-arginine + ATP = L-arginyl-tRNA(Arg) + AMP + diphosphate. The chain is Arginine--tRNA ligase from Clostridioides difficile (strain 630) (Peptoclostridium difficile).